The primary structure comprises 140 residues: Nucleoside diphosphate kinase (140 aa).

6 residues coordinate ATP: Lys-11, Phe-59, Arg-87, Thr-93, Arg-104, and Asn-114. Residue His-117 is the Pros-phosphohistidine intermediate of the active site.

The protein belongs to the NDK family. As to quaternary structure, homotetramer. Mg(2+) is required as a cofactor.

It localises to the cytoplasm. It catalyses the reaction a 2'-deoxyribonucleoside 5'-diphosphate + ATP = a 2'-deoxyribonucleoside 5'-triphosphate + ADP. It carries out the reaction a ribonucleoside 5'-diphosphate + ATP = a ribonucleoside 5'-triphosphate + ADP. Functionally, major role in the synthesis of nucleoside triphosphates other than ATP. The ATP gamma phosphate is transferred to the NDP beta phosphate via a ping-pong mechanism, using a phosphorylated active-site intermediate. The protein is Nucleoside diphosphate kinase of Paracoccus denitrificans (strain Pd 1222).